Reading from the N-terminus, the 209-residue chain is Large ribosomal subunit protein uL3 (209 aa).

Residues Ala119–Met145 are disordered.

The protein belongs to the universal ribosomal protein uL3 family. In terms of assembly, part of the 50S ribosomal subunit. Forms a cluster with proteins L14 and L19.

In terms of biological role, one of the primary rRNA binding proteins, it binds directly near the 3'-end of the 23S rRNA, where it nucleates assembly of the 50S subunit. The chain is Large ribosomal subunit protein uL3 from Staphylococcus aureus (strain COL).